A 241-amino-acid chain; its full sequence is 3-oxoacyl-[acyl-carrier-protein] reductase FabG (241 aa).

NADP(+)-binding positions include G13–G16, S38, E57–V58, and N83. Residue S135 participates in substrate binding. The active-site Proton acceptor is Y148. Residues Y148–K152 and I181 each bind NADP(+).

Belongs to the short-chain dehydrogenases/reductases (SDR) family. As to quaternary structure, homotetramer.

The enzyme catalyses a (3R)-hydroxyacyl-[ACP] + NADP(+) = a 3-oxoacyl-[ACP] + NADPH + H(+). Its pathway is lipid metabolism; fatty acid biosynthesis. Functionally, catalyzes the NADPH-dependent reduction of beta-ketoacyl-ACP substrates to beta-hydroxyacyl-ACP products, the first reductive step in the elongation cycle of fatty acid biosynthesis. The chain is 3-oxoacyl-[acyl-carrier-protein] reductase FabG (fabG) from Rickettsia conorii (strain ATCC VR-613 / Malish 7).